The primary structure comprises 411 residues: LIM domain-binding protein 1 (411 aa).

The residue at position 2 (serine 2) is an N-acetylserine. Phosphothreonine is present on threonine 61. Serine 265 and serine 302 each carry phosphoserine. Disordered regions lie at residues 284–330 (PPAE…TFAL) and 367–411 (DAAN…QASQ). Over residues 302–318 (SGGSTMSSGGGNTNNSN) the composition is skewed to low complexity. The 40-residue stretch at 336-375 (DVMVVGEPTLMGGEFGDEDERLITRLENTQFDAANGIDDE) folds into the LIM interaction domain (LID) domain.

Belongs to the LDB family. Interacts with ESR1. Forms homodimers and heterodimers. Interacts with and activates LHX1/LIM1. Interacts with the LIM domains of ISL1 and LMO2. Can assemble in a complex with LMO2 and TAL1/SCL but does not interact with TAL1/SCL directly. Strongly interacts with the LIM2 domain of LMX1A and more weakly with the LIM1 domain. Homodimerization is not required for, and does not effect, LMX1A-binding. Component of a nuclear TAL-1 complex composed at least of CBFA2T3, LDB1, TAL1 and TCF3. Interacts with LHX6 and LHX9. At neuronal promoters, forms a complex with LHX3 involved in the specification of interneurons, in motor neurons, it is displaced by ISL1 to form a ternary complex in which ISL1 contacts both LHX3 and LDB1. Interacts with SLK; leading to negatively regulate SLK kinase activity. Interacts with YWHAZ. Interacts with PRDM1/BLIMP1. Interacts with LMO4. Interacts with RLIM/RNF12; the interaction inhibits the ubiquitination of LMO proteins. In terms of processing, ubiquitinated by RLIM/RNF12, leading to its degradation by the proteasome. In terms of tissue distribution, expressed in multiple adult tissues including heart, brain, liver, kidney, testis, lung and muscle, with expression highest in the pituitary gland and skin.

The protein resides in the nucleus. Functionally, binds to the LIM domain of a wide variety of LIM domain-containing transcription factors. May regulate the transcriptional activity of LIM-containing proteins by determining specific partner interactions. Plays a role in the development of interneurons and motor neurons in cooperation with LHX3 and ISL1. Acts synergistically with LHX1/LIM1 in axis formation and activation of gene expression. Acts with LMO2 in the regulation of red blood cell development, maintaining erythroid precursors in an immature state. The chain is LIM domain-binding protein 1 (Ldb1) from Mus musculus (Mouse).